Consider the following 411-residue polypeptide: Meiotic driver wtf33 (411 aa).

Positions 1–95 (MKNKYYPLRS…ENHSSGTADN (95 aa)) are disordered. Residues 11–29 (SMDELSTKNDNEIDLEKGP) show a composition bias toward basic and acidic residues. Positions 57–72 (GANNPNLFNTDESTTP) are enriched in polar residues. Transmembrane regions (helical) follow at residues 104 to 124 (AILS…YLTY), 137 to 157 (WVYF…LWCF), 244 to 264 (EMMI…FGCV), 281 to 301 (TISA…WTLW), 303 to 323 (ALSG…LVNG), and 336 to 356 (GYEI…LYEM).

The protein belongs to the WTF family. As to quaternary structure, homomer. Forms protein aggregates. The two isoforms can interact with each other and with themselves. High sequence similarity is required for their interaction.

It is found in the spore membrane. The protein localises to the vacuole membrane. Its subcellular location is the ascus epiplasm. It localises to the cytoplasm. The protein resides in the endoplasmic reticulum membrane. In terms of biological role, promotes unequal transmission of alleles from the parental zygote to progeny spores by acting as poison/antidote system where the poison and antidote proteins are produced from the same locus; the poison component is trans-acting and targets all spores within an ascus whereas the antidote component is spore-specific, leading to poisoning of all progeny that do not inherit the allele. Functionally, localizes isoform 2 to the vacuole thereby facilitating its degradation. Forms toxic aggregates that disrupt spore maturation. The protein is Meiotic driver wtf33 of Schizosaccharomyces kambucha (Fission yeast).